Reading from the N-terminus, the 1564-residue chain is Superkiller complex protein 3 (1564 aa).

S2 carries the N-acetylserine modification. TPR repeat units lie at residues 6–39 (VKTA…EKNN), 40–73 (YNAW…EPDQ), 272–305 (GPGL…SPVC), 307–339 (SGWY…VDNL), 386–419 (PGLL…YPDL), 420–453 (AEVH…DTEV), 455–492 (EYHY…DTYM), 493–527 (GKVF…DDTD), 564–597 (KWAW…DPKD), 598–631 (FNCW…NPES), 633–665 (YSVF…KEDY), 679–713 (MAKA…RADV), 790–824 (AQHL…DSNN), 826–860 (LYWN…EQIN), 861–894 (AVAW…DPSY), 980–1013 (APAF…LQTA), 1020–1054 (NVAI…LEDI), 1056–1084 (GFAL…VESE), 1326–1359 (KWSL…NPDQ), and 1400–1433 (VPAW…ASQR).

This sequence belongs to the SKI3 family. Component of the SKI complex which consists of SKIC2, SKIC3 and SKIC8. Interacts with PAF1. In terms of tissue distribution, widely expressed with the highest levels observed in vascular tissues, lymph node, pituitary, lung and intestine. Not expressed in the liver.

The protein resides in the cytoplasm. It is found in the nucleus. Component of the SKI complex, a multiprotein complex that assists the RNA-degrading exosome during the mRNA decay and quality-control pathways. The SKI complex catalyzes mRNA extraction from 80S ribosomal complexes in the 3'-5' direction and channels mRNA to the cytosolic exosome for degradation. SKI-mediated extraction of mRNA from stalled ribosomes allow binding of the Pelota-HBS1L complex and subsequent ribosome disassembly by ABCE1 for ribosome recycling. In the nucleus, the SKI complex associates with transcriptionally active genes in a manner dependent on PAF1 complex (PAF1C). The sequence is that of Superkiller complex protein 3 from Homo sapiens (Human).